Consider the following 430-residue polypeptide: tRNA(Ile)-lysidine synthase (430 aa).

24 to 29 (SGGLDS) contributes to the ATP binding site.

This sequence belongs to the tRNA(Ile)-lysidine synthase family.

The protein resides in the cytoplasm. The catalysed reaction is cytidine(34) in tRNA(Ile2) + L-lysine + ATP = lysidine(34) in tRNA(Ile2) + AMP + diphosphate + H(+). Functionally, ligates lysine onto the cytidine present at position 34 of the AUA codon-specific tRNA(Ile) that contains the anticodon CAU, in an ATP-dependent manner. Cytidine is converted to lysidine, thus changing the amino acid specificity of the tRNA from methionine to isoleucine. This Haemophilus influenzae (strain 86-028NP) protein is tRNA(Ile)-lysidine synthase.